The sequence spans 308 residues: Protein translocase subunit SecF (308 aa).

6 helical membrane-spanning segments follow: residues 28–48 (SIIL…NFGI), 140–160 (IEAG…YIWV), 164–184 (WYFG…ALGF), 194–214 (LSTI…SVVI), 246–266 (ILTV…GGEA), and 272–292 (VLVF…SAPI).

Belongs to the SecD/SecF family. SecF subfamily. In terms of assembly, forms a complex with SecD. Part of the essential Sec protein translocation apparatus which comprises SecA, SecYEG and auxiliary proteins SecDF-YajC and YidC.

The protein localises to the cell inner membrane. Part of the Sec protein translocase complex. Interacts with the SecYEG preprotein conducting channel. SecDF uses the proton motive force (PMF) to complete protein translocation after the ATP-dependent function of SecA. The polypeptide is Protein translocase subunit SecF (Rickettsia conorii (strain ATCC VR-613 / Malish 7)).